The sequence spans 415 residues: Serine hydroxymethyltransferase (415 aa).

(6S)-5,6,7,8-tetrahydrofolate is bound by residues Leu117 and 121-123 (GHL). Position 226 is an N6-(pyridoxal phosphate)lysine (Lys226).

Belongs to the SHMT family. As to quaternary structure, homodimer. The cofactor is pyridoxal 5'-phosphate.

It is found in the cytoplasm. The catalysed reaction is (6R)-5,10-methylene-5,6,7,8-tetrahydrofolate + glycine + H2O = (6S)-5,6,7,8-tetrahydrofolate + L-serine. The protein operates within one-carbon metabolism; tetrahydrofolate interconversion. Its pathway is amino-acid biosynthesis; glycine biosynthesis; glycine from L-serine: step 1/1. Functionally, catalyzes the reversible interconversion of serine and glycine with tetrahydrofolate (THF) serving as the one-carbon carrier. This reaction serves as the major source of one-carbon groups required for the biosynthesis of purines, thymidylate, methionine, and other important biomolecules. Also exhibits THF-independent aldolase activity toward beta-hydroxyamino acids, producing glycine and aldehydes, via a retro-aldol mechanism. This Dehalococcoides mccartyi (strain ATCC BAA-2100 / JCM 16839 / KCTC 5957 / BAV1) protein is Serine hydroxymethyltransferase.